Here is a 458-residue protein sequence, read N- to C-terminus: Plant UBX domain-containing protein 2 (458 aa).

The segment at Met-1–Gly-103 is disordered. A compositionally biased stretch (polar residues) spans Pro-44 to Ala-54. Pro residues predominate over residues Asn-56 to Glu-70. Residues Ser-74–Arg-85 show a composition bias toward polar residues. The C2H2-type; atypical zinc-finger motif lies at Phe-121–Cys-143. The 68-residue stretch at Ser-181–Ser-248 folds into the PUB domain. Positions Lys-349–Phe-433 constitute a UBX domain.

Interacts with CDC48A in vitro and co-fractionates with membrane-associated but not soluble CDC48A in vivo.

The protein localises to the membrane. Functionally, facilitates the interaction of SYP31 and CDC48A, thereby regulating an CDC48A membrane-associated function. Appears to act as a negative regulator mediating the powdery mildew-plant interaction. This Arabidopsis thaliana (Mouse-ear cress) protein is Plant UBX domain-containing protein 2.